Consider the following 334-residue polypeptide: Chitin synthase export chaperone (334 aa).

7 consecutive transmembrane segments (helical) span residues 49–69, 88–108, 123–143, 159–179, 185–205, 220–240, and 250–270; these read IIFE…TVIM, FFYL…GVVP, GFSS…FQLY, LAAF…WAGL, VGLF…YVAM, LGDI…LYAF, and HYLD…MMVY.

It belongs to the CHS7 family. In terms of assembly, interacts with CHS3.

It is found in the endoplasmic reticulum membrane. In terms of biological role, chaperone required for the export of the chitin synthase CHS3 from the endoplasmic reticulum. The chain is Chitin synthase export chaperone (CHS7) from Gibberella zeae (strain ATCC MYA-4620 / CBS 123657 / FGSC 9075 / NRRL 31084 / PH-1) (Wheat head blight fungus).